Here is a 369-residue protein sequence, read N- to C-terminus: Peptide chain release factor 2 (369 aa).

Q249 bears the N5-methylglutamine mark.

It belongs to the prokaryotic/mitochondrial release factor family. Post-translationally, methylated by PrmC. Methylation increases the termination efficiency of RF2.

The protein resides in the cytoplasm. In terms of biological role, peptide chain release factor 2 directs the termination of translation in response to the peptide chain termination codons UGA and UAA. This is Peptide chain release factor 2 from Thermosipho melanesiensis (strain DSM 12029 / CIP 104789 / BI429).